Reading from the N-terminus, the 178-residue chain is Caveolin-1 (178 aa).

Ser-2 is modified (N-acetylserine). Ser-2 bears the Phosphoserine mark. Positions 2–94 (SGGKYVDSEG…WKASFTTFTV (93 aa)) are required for homooligomerization. Residues 2 to 104 (SGGKYVDSEG…TKYWFYRLLS (103 aa)) lie on the Cytoplasmic side of the membrane. At Lys-5 the chain carries N6-acetyllysine; alternate. A Glycyl lysine isopeptide (Lys-Gly) (interchain with G-Cter in ubiquitin); alternate cross-link involves residue Lys-5. Position 6 is a phosphotyrosine (Tyr-6). Ser-9 bears the Phosphoserine mark. Tyr-14 carries the phosphotyrosine; by ABL1 modification. Tyr-25 is subject to Phosphotyrosine. Glycyl lysine isopeptide (Lys-Gly) (interchain with G-Cter in ubiquitin) cross-links involve residues Lys-26, Lys-30, Lys-39, Lys-47, and Lys-57. Residues 82-94 (DGIWKASFTTFTV) are interaction with CAVIN3. The segment at residues 105-125 (GIFGIPMALIWGVYFAILSFL) is an intramembrane region (helical). The Cytoplasmic segment spans residues 126-178 (HIWAVVPCIKSFLIEIQCISRVYSIYVHTFCDPLFEAIGKIFSNIRISTQKEI). The interacts with SPRY1, SPRY2, SPRY3 and SPRY4 stretch occupies residues 131-142 (VPCIKSFLIEIQ). Residues Cys-133, Cys-143, and Cys-156 are each lipidated (S-palmitoyl cysteine). The tract at residues 149–160 (SIYVHTFCDPLF) is interacts with SPRY1, SPRY2, and SPRY4. Positions 167-178 (FSNIRISTQKEI) are interacts with SPRY1, SPRY2, SPRY3 and SPRY4.

Belongs to the caveolin family. As to quaternary structure, homooligomer. Interacts with GLIPR2. Interacts with NOSTRIN. Interacts with SNAP25 and STX1A. Interacts (via the N-terminus) with DPP4; the interaction is direct. Interacts with CTNNB1, CDH1 and JUP. Interacts with PACSIN2; this interaction induces membrane tubulation. Interacts with SLC7A9. Interacts with BMX and BTK. Interacts with TGFBR1. Interacts with CAVIN3 (via leucine-zipper domain) in a cholesterol-sensitive manner. Interacts with CAVIN1. Interacts with EHD2 in a cholesterol-dependent manner. Forms a ternary complex with UBXN6 and VCP; mediates CAV1 targeting to lysosomes for degradation. Interacts with ABCG1; this interaction regulates ABCG1-mediated cholesterol efflux. Interacts with NEU3; this interaction enhances NEU3 sialidase activity within caveola. Interacts (via C-terminus) with SPRY1, SPRY2 (via C-terminus), SPRY3, and SPRY4. Interacts with IGFBP5; this interaction allows trafficking of IGFBP5 from the plasma membrane to the nucleus. Post-translationally, phosphorylated at Tyr-14 by ABL1 in response to oxidative stress. Ubiquitinated. Undergo monoubiquitination and multi- and/or polyubiquitination. Monoubiquitination of N-terminal lysines promotes integration in a ternary complex with UBXN6 and VCP which promotes oligomeric CAV1 targeting to lysosomes for degradation. Ubiquitinated by ZNRF1; leading to degradation and modulation of the TLR4-mediated immune response.

The protein resides in the golgi apparatus membrane. Its subcellular location is the cell membrane. It localises to the membrane. The protein localises to the caveola. It is found in the membrane raft. May act as a scaffolding protein within caveolar membranes. Forms a stable heterooligomeric complex with CAV2 that targets to lipid rafts and drives caveolae formation. Mediates the recruitment of CAVIN proteins (CAVIN1/2/3/4) to the caveolae. Interacts directly with G-protein alpha subunits and can functionally regulate their activity. Involved in the costimulatory signal essential for T-cell receptor (TCR)-mediated T-cell activation. Its binding to DPP4 induces T-cell proliferation and NF-kappa-B activation in a T-cell receptor/CD3-dependent manner. Recruits CTNNB1 to caveolar membranes and may regulate CTNNB1-mediated signaling through the Wnt pathway. Negatively regulates TGFB1-mediated activation of SMAD2/3 by mediating the internalization of TGFBR1 from membrane rafts leading to its subsequent degradation. Binds 20(S)-hydroxycholesterol (20(S)-OHC). In Echinops telfairi (Lesser hedgehog tenrec), this protein is Caveolin-1 (CAV1).